We begin with the raw amino-acid sequence, 75 residues long: Large ribosomal subunit protein bL31 (75 aa).

Zn(2+) contacts are provided by Cys16, Cys18, Cys37, and Cys40.

Belongs to the bacterial ribosomal protein bL31 family. Type A subfamily. Part of the 50S ribosomal subunit. Zn(2+) serves as cofactor.

Functionally, binds the 23S rRNA. In Legionella pneumophila (strain Paris), this protein is Large ribosomal subunit protein bL31.